The chain runs to 300 residues: Ribosomal RNA small subunit methyltransferase H (300 aa).

Residues 46-48, Asp65, Phe92, Asp107, and Gln114 contribute to the S-adenosyl-L-methionine site; that span reads GGH.

Belongs to the methyltransferase superfamily. RsmH family.

It is found in the cytoplasm. The catalysed reaction is cytidine(1402) in 16S rRNA + S-adenosyl-L-methionine = N(4)-methylcytidine(1402) in 16S rRNA + S-adenosyl-L-homocysteine + H(+). Functionally, specifically methylates the N4 position of cytidine in position 1402 (C1402) of 16S rRNA. The polypeptide is Ribosomal RNA small subunit methyltransferase H (Prochlorococcus marinus (strain MIT 9215)).